A 584-amino-acid chain; its full sequence is Arginine--tRNA ligase (584 aa).

The 'HIGH' region motif lies at 130-140 (PNVAKEMHVGH).

Belongs to the class-I aminoacyl-tRNA synthetase family. In terms of assembly, monomer.

It is found in the cytoplasm. The enzyme catalyses tRNA(Arg) + L-arginine + ATP = L-arginyl-tRNA(Arg) + AMP + diphosphate. In Protochlamydia amoebophila (strain UWE25), this protein is Arginine--tRNA ligase.